Consider the following 315-residue polypeptide: Large ribosomal subunit protein uL10 (315 aa).

Over residues 285–294 (AAAPAASAAP) the composition is skewed to low complexity. Positions 285 to 315 (AAAPAASAAPAKEEKEESEESDDDMGFGLFD) are disordered. A compositionally biased stretch (acidic residues) spans 300 to 309 (EESEESDDDM).

The protein belongs to the universal ribosomal protein uL10 family. In terms of assembly, P0 forms a pentameric complex by interaction with dimers of P1 and P2. Post-translationally, phosphorylated.

Its function is as follows. Ribosomal protein P0 is the functional equivalent of E.coli protein L10. The polypeptide is Large ribosomal subunit protein uL10 (RPLP0) (Lithobates sylvaticus (Wood frog)).